The primary structure comprises 792 residues: Oxidoreductase cns1 (792 aa).

As to quaternary structure, interacts with cns2.

It localises to the lipid droplet. Its pathway is secondary metabolite biosynthesis. Functionally, oxidoreductase; part of the gene cluster that mediates the biosynthesis of cordycepin (COR) and pentostatin (PTN), two adenosine analogs with related bioactivity profiles as both mimic adenosine and can inhibit some of the processes that are adenosine dependent. Within the pathway, cns1 catalyzes the last step by converting the cns2 product 2'-carbonyl-3'-deoxyadenosine (2'-C-3'-dA) into cordycepin (3'-deoxyadenosine). The first step of cordycepin biosynthesis involves hydroxyl phosphorylation of the 3'-OH position on adenosine to produce adenosine-3'-monophosphate (3'-AMP), catalyzed by kinase activity of cns3. Next, 3'-AMP is dephosphorylated to 2'-carbonyl-3'-deoxyadenosine by cns2, which is finally converted to cordycepin by the oxidoreductase cns1. Pentostatin production is mediated by the ATP phosphoribosyltransferase activity of cns3 on adenosine to inhibit the activity of adenosine deaminase (ADA) to prevent COR deamination to 3'-deoxyinosine (3'-dI). This chain is Oxidoreductase cns1, found in Cordyceps militaris (strain CM01) (Caterpillar fungus).